Consider the following 187-residue polypeptide: ATP synthase subunit b, chloroplastic (187 aa).

A helical transmembrane segment spans residues 34 to 56 (IINLSVVLGLVFTLGRNFLISLL).

The protein belongs to the ATPase B chain family. As to quaternary structure, F-type ATPases have 2 components, F(1) - the catalytic core - and F(0) - the membrane proton channel. F(1) has five subunits: alpha(3), beta(3), gamma(1), delta(1), epsilon(1). F(0) has four main subunits: a(1), b(1), b'(1) and c(10-14). The alpha and beta chains form an alternating ring which encloses part of the gamma chain. F(1) is attached to F(0) by a central stalk formed by the gamma and epsilon chains, while a peripheral stalk is formed by the delta, b and b' chains.

The protein resides in the plastid. It is found in the chloroplast thylakoid membrane. Functionally, f(1)F(0) ATP synthase produces ATP from ADP in the presence of a proton or sodium gradient. F-type ATPases consist of two structural domains, F(1) containing the extramembraneous catalytic core and F(0) containing the membrane proton channel, linked together by a central stalk and a peripheral stalk. During catalysis, ATP synthesis in the catalytic domain of F(1) is coupled via a rotary mechanism of the central stalk subunits to proton translocation. Its function is as follows. Component of the F(0) channel, it forms part of the peripheral stalk, linking F(1) to F(0). This Pleurastrum terricola (Filamentous green alga) protein is ATP synthase subunit b, chloroplastic.